The following is a 419-amino-acid chain: Hydrolase LUC6 (419 aa).

Ser-238 is an active-site residue.

This sequence belongs to the AB hydrolase superfamily. FUS2 hydrolase family.

It participates in mycotoxin biosynthesis. Its function is as follows. Hydrolase; part of the gene cluster that mediates the biosynthesis of the mycotoxin lucilactaene and the lucilactaene-related compound NG-391 that act as cell cycle inhibitors with potent growth inhibitory activity against malarial parasites, moderate growth inhibitory activity against cancer cells, and no activity against bacteria and fungi. Within the pathway, LUC6 may catalyze the 2-pyrrolidone ring formation to form prelucilactaene C from prelucilactaene B, followed by C-15 hydroxylation by the same enzyme to give prelucilactaene D, epoxydation to yield prelucilactaene E, and finally cyclization to yield prelucilactaene F. The pathway begins with the hybrid PKS-NRPS synthetase LUC5 which is responsible for the condensation of one acetyl-coenzyme A (CoA) unit with six malonyl-CoA units and the amide linkage of the arising heptaketide and homoserine, subsequently releasing the first intermediate prelucilactaene B. Both the cytochrome P450 monooxygenase LUC2 and the hydrolase LUC6 function in parallel in modification of prelucilactaene B. LUC6 may catalyze the 2-pyrrolidone ring formation to form prelucilactaene C from prelucilactaene B, followed by C-15 hydroxylation by the same enzyme to give prelucilactaene D, which is then converted to prelucilactaene E by epoxidation, and finally to prelucilactaene F by cyclization. Prelucilactane D, prelucilactaene E, and prelucilactaene F can be converted to dihydrolucilactaene, NG391, and lucilactaene, respectively, via C-20 methyl group hydroxylation by the cytochrome P450 monooxygenase LUC2. However, LUC2, unlike FUS8 in fusarin C biosynthesis, is not enough for the full oxidation of the C-20 methyl group into carboxylic acid, which is a prerequisite for the final methylation step. The aldehyde dehydrogenase LUC3 is involved in the biosynthesis by further oxidation of the C-20 alcoholic analog prelucilactaene G into a carboxylic derivative. This unidentified carboxylic derivative may be converted to demethyllucilactaene. As the last step, the methyltransferase LUC1 methylates the hydroxyl group at C-21 of demethyllucilactaene to generate lucilactaene. This is Hydrolase LUC6 from Fusarium sp.